The primary structure comprises 410 residues: Maintenance of mitochondrial morphology protein 1 (410 aa).

The Lumenal segment spans residues 1-19 (MTPDSCPVRPEPTLSFTQG). The helical transmembrane segment at 20–40 (LIVGQISVVFLIAAFIKFFIF) threads the bilayer. At 41-410 (GDPPSAEETA…PMPGSLAVDD (370 aa)) the chain is on the cytoplasmic side. Residues 71 to 87 (LRTSNQRPGSQQQQSVL) are compositionally biased toward polar residues. The tract at residues 71-98 (LRTSNQRPGSQQQQSVLNRKKSSILRSG) is disordered. The region spanning 119–335 (QPESLDWFNV…EPRFQEIPLP (217 aa)) is the SMP-LTD domain. A disordered region spans residues 380–410 (ARQAAQRDSLRYRRPRADDAFPMPGSLAVDD). The segment covering 387-398 (DSLRYRRPRADD) has biased composition (basic and acidic residues).

This sequence belongs to the MMM1 family. As to quaternary structure, homodimer. Component of the ER-mitochondria encounter structure (ERMES) or MDM complex, composed of MMM1, MDM10, MDM12 and MDM34. An MMM1 homodimer associates with one molecule of MDM12 on each side in a pairwise head-to-tail manner, and the SMP-LTD domains of MMM1 and MDM12 generate a continuous hydrophobic tunnel for phospholipid trafficking.

The protein resides in the endoplasmic reticulum membrane. Its function is as follows. Component of the ERMES/MDM complex, which serves as a molecular tether to connect the endoplasmic reticulum (ER) and mitochondria. Components of this complex are involved in the control of mitochondrial shape and protein biogenesis, and function in nonvesicular lipid trafficking between the ER and mitochondria. The MDM12-MMM1 subcomplex functions in the major beta-barrel assembly pathway that is responsible for biogenesis of all outer membrane beta-barrel proteins, and acts in a late step after the SAM complex. The MDM10-MDM12-MMM1 subcomplex further acts in the TOM40-specific pathway after the action of the MDM12-MMM1 complex. Essential for establishing and maintaining the structure of mitochondria and maintenance of mtDNA nucleoids. In Pyricularia oryzae (strain 70-15 / ATCC MYA-4617 / FGSC 8958) (Rice blast fungus), this protein is Maintenance of mitochondrial morphology protein 1.